We begin with the raw amino-acid sequence, 185 residues long: CASP-like protein 2C2 (185 aa).

The Cytoplasmic portion of the chain corresponds to 1–22 (MAAAARVSEVKAEGLLRGACTA). The helical transmembrane segment at 23-43 (LAAAAALLVGLSTQTETVLLV) threads the bilayer. Over 44–53 (RKKATVKDVQ) the chain is Extracellular. A helical membrane pass occupies residues 54 to 74 (ALWVLAMAAAAAAGYHLLQLL). Topologically, residues 75–104 (KCLYLGRVGGARPCRRSSRALAWTCLLLDK) are cytoplasmic. The helical transmembrane segment at 105 to 125 (ACAYTTFATTVAAAQACVVAL) threads the bilayer. Residues 126-146 (DGAHALQWTKLCNIYTRFCEQ) are Extracellular-facing. A helical membrane pass occupies residues 147 to 167 (VAGSLVLGMLAAVGTAVLSAA). The Cytoplasmic segment spans residues 168 to 185 (SARNVFRHYASLETYAAH).

The protein belongs to the Casparian strip membrane proteins (CASP) family. In terms of assembly, homodimer and heterodimers.

It is found in the cell membrane. The protein is CASP-like protein 2C2 of Zea mays (Maize).